Here is a 73-residue protein sequence, read N- to C-terminus: MVCTQRVAGLGHMNLRILENNKGKKVVAVDPVGAREGNWVFTASGSAARFACPNPEVQTDLTIGGIIDYWESN.

A BMV domain is found at 1–68; it reads MVCTQRVAGL…TDLTIGGIID (68 aa).

This sequence belongs to the CcmL/EutN family. CsoS4 subfamily. In terms of assembly, homopentamer.

The protein localises to the carboxysome. Functionally, probably forms vertices in the carboxysome, a polyhedral inclusion where RuBisCO (ribulose bisphosphate carboxylase, cbbL-cbbS) is sequestered. Has been modeled to induce curvature upon insertion into an otherwise flat hexagonal layer of major carboxysome subunits. Has not been identified in purified carboxysomes; it is expected to be present in very low amounts. This Prochlorococcus marinus subsp. pastoris (strain CCMP1986 / NIES-2087 / MED4) protein is Carboxysome shell vertex protein CsoS4B.